The following is a 441-amino-acid chain: BTB/POZ domain-containing protein At4g30940 (441 aa).

The region spanning 6–74 (DRIKFNVGGR…LRTGDLNIPP (69 aa)) is the BTB domain.

Its pathway is protein modification; protein ubiquitination. Its function is as follows. May act as a substrate-specific adapter of an E3 ubiquitin-protein ligase complex (CUL3-RBX1-BTB) which mediates the ubiquitination and subsequent proteasomal degradation of target proteins. This chain is BTB/POZ domain-containing protein At4g30940, found in Arabidopsis thaliana (Mouse-ear cress).